A 1251-amino-acid chain; its full sequence is Myosin-1 (1251 aa).

The disordered stretch occupies residues 1–37 (MGQSKRPFKNKEEKKSRGFGRSRHDDAGAGGRPQVKK). The span at 9–27 (KNKEEKKSRGFGRSRHDDA) shows a compositional bias: basic and acidic residues. The Myosin motor domain occupies 48–727 (IGVSDLTLLS…TLFALEHMRD (680 aa)). Residue 141–148 (GESGAGKT) coordinates ATP. Ser-369 is modified (phosphoserine). The segment at 416–498 (TIGILDIYGF…PGVFAALNDA (83 aa)) is actin-binding. IQ domains follow at residues 731–751 (HNMA…RTEC) and 752–777 (AIRI…QGHK). One can recognise a TH1 domain in the interval 785 to 980 (RRRYSLVGSR…PGEPANSVSK (196 aa)). 2 disordered regions span residues 958 to 1093 (RDDV…SNEL) and 1135 to 1227 (AKTP…ASIA). A compositionally biased stretch (low complexity) spans 1040-1052 (VAQSVTAVAAAHA). A compositionally biased stretch (pro residues) spans 1061-1073 (RPPPPPPPTQPPA). The SH3 domain occupies 1074 to 1135 (PKKDTAKALY…PEAYLEPIVA (62 aa)). Residues 1139-1148 (SLPPPPPSLP) are compositionally biased toward pro residues. 2 stretches are compositionally biased toward polar residues: residues 1150–1161 (QSKSAVSNTLPN) and 1216–1225 (ATPSSLSNAS).

This sequence belongs to the TRAFAC class myosin-kinesin ATPase superfamily. Myosin family. Phosphorylation of the TEDS site (Ser-369) is required for the polarization of the actin cytoskeleton. Phosphorylation probably activates the myosin-I ATPase activity.

The protein resides in the cytoplasm. It localises to the cytoskeleton. The protein localises to the actin patch. Its function is as follows. Type-I myosin implicated in the organization of the actin cytoskeleton. Required for proper actin cytoskeleton polarization. At the cell cortex, assembles in patch-like structures together with proteins from the actin-polymerizing machinery and promotes actin assembly. Functions as actin nucleation-promoting factor (NPF) for the Arp2/3 complex. This Coccidioides immitis (strain RS) (Valley fever fungus) protein is Myosin-1 (MYO1).